Reading from the N-terminus, the 561-residue chain is Arf-GAP domain and FG repeat-containing protein 1 (561 aa).

Residues 11–135 (EKHLKMLRDM…WYVPPEQAKV (125 aa)) enclose the Arf-GAP domain. The segment at 29-52 (CFDCDQRGPTYVNMTVGSFVCTSC) adopts a C4-type zinc-finger fold. Serine 167 carries the post-translational modification Phosphoserine. Residues 170–193 (ALHLNKGTPSQSPVVGRSQGQQQE) are disordered. Residues 176-191 (GTPSQSPVVGRSQGQQ) show a composition bias toward polar residues. Threonine 177 bears the Phosphothreonine mark. Residues serine 181 and serine 362 each carry the phosphoserine modification. The O-linked (GlcNAc) serine glycan is linked to serine 367. Residues 413 to 433 (SAQTQPASSGPAPFGATPSTN) form a disordered region.

Interacts with FCHO1. Interacts with EPS15R and EPS15. O-glycosylated. In terms of tissue distribution, expressed in the testes (at protein level).

It localises to the nucleus. Its subcellular location is the cytoplasmic vesicle. In terms of biological role, required for vesicle docking or fusion during acrosome biogenesis. May play a role in RNA trafficking or localization. In Mus musculus (Mouse), this protein is Arf-GAP domain and FG repeat-containing protein 1 (Agfg1).